We begin with the raw amino-acid sequence, 723 residues long: Enolase-phosphatase E1 (723 aa).

Substrate-binding positions include 126–127 (SS) and lysine 160. Residues 239–723 (GAGAKRKIDE…TPTPPIEAES (485 aa)) form a disordered region. 2 stretches are compositionally biased toward basic and acidic residues: residues 262-284 (VKKDENGDAAAKKDETAKVDEPA) and 293-308 (AAKEEAAAPAEGKMEV). The segment covering 311-320 (AAAAAAPPAD) has biased composition (low complexity). Composition is skewed to basic and acidic residues over residues 322–406 (AEEK…VVEE), 419–443 (AEEKEAEKKEEDKAAEPAAEKKPAE), 468–479 (EPAKEKPAEAEA), 487–496 (TKAEVVEKPA), 511–565 (SADK…KGEE), and 577–593 (VEAKEDAAKPEEKKSDA). Low complexity-rich tracts occupy residues 596 to 606 (VSTTTTTTSTE) and 636 to 647 (NGEAEPAAEAVV). A compositionally biased stretch (basic and acidic residues) spans 653–666 (GKHEEKGDSDKEND).

It belongs to the HAD-like hydrolase superfamily. MasA/MtnC family. As to quaternary structure, monomer.

Its subcellular location is the cytoplasm. The protein resides in the nucleus. The catalysed reaction is 5-methylsulfanyl-2,3-dioxopentyl phosphate + H2O = 1,2-dihydroxy-5-(methylsulfanyl)pent-1-en-3-one + phosphate. It functions in the pathway amino-acid biosynthesis; L-methionine biosynthesis via salvage pathway; L-methionine from S-methyl-5-thio-alpha-D-ribose 1-phosphate: step 3/6. The protein operates within amino-acid biosynthesis; L-methionine biosynthesis via salvage pathway; L-methionine from S-methyl-5-thio-alpha-D-ribose 1-phosphate: step 4/6. Bifunctional enzyme that catalyzes the enolization of 2,3-diketo-5-methylthiopentyl-1-phosphate (DK-MTP-1-P) into the intermediate 2-hydroxy-3-keto-5-methylthiopentenyl-1-phosphate (HK-MTPenyl-1-P), which is then dephosphorylated to form the acireductone 1,2-dihydroxy-3-keto-5-methylthiopentene (DHK-MTPene). The chain is Enolase-phosphatase E1 from Culex quinquefasciatus (Southern house mosquito).